A 260-amino-acid chain; its full sequence is Small ribosomal subunit protein uS2 (260 aa).

Residues 228-240 (RKETKAENAEEAM) are compositionally biased toward basic and acidic residues. The tract at residues 228–260 (RKETKAENAEEAMKQAAEAEAEAAAPAAEESAE) is disordered. Residues 241–260 (KQAAEAEAEAAAPAAEESAE) are compositionally biased toward low complexity.

It belongs to the universal ribosomal protein uS2 family.

In Oleidesulfovibrio alaskensis (strain ATCC BAA-1058 / DSM 17464 / G20) (Desulfovibrio alaskensis), this protein is Small ribosomal subunit protein uS2.